Consider the following 240-residue polypeptide: 1-(5-phosphoribosyl)-5-[(5-phosphoribosylamino)methylideneamino] imidazole-4-carboxamide isomerase (240 aa).

The Proton acceptor role is filled by Asp8. Catalysis depends on Asp130, which acts as the Proton donor.

It belongs to the HisA/HisF family.

It localises to the cytoplasm. The catalysed reaction is 1-(5-phospho-beta-D-ribosyl)-5-[(5-phospho-beta-D-ribosylamino)methylideneamino]imidazole-4-carboxamide = 5-[(5-phospho-1-deoxy-D-ribulos-1-ylimino)methylamino]-1-(5-phospho-beta-D-ribosyl)imidazole-4-carboxamide. It functions in the pathway amino-acid biosynthesis; L-histidine biosynthesis; L-histidine from 5-phospho-alpha-D-ribose 1-diphosphate: step 4/9. This is 1-(5-phosphoribosyl)-5-[(5-phosphoribosylamino)methylideneamino] imidazole-4-carboxamide isomerase from Elusimicrobium minutum (strain Pei191).